An 895-amino-acid chain; its full sequence is Eukaryotic translation initiation factor 3 subunit C (895 aa).

The disordered stretch occupies residues 1-108 (MSGFFRKVGD…DSDSEEEVKK (108 aa)). 2 stretches are compositionally biased toward acidic residues: residues 11–31 (SDSE…ESGD) and 52–75 (DDSD…DDDN). A PCI domain is found at 638 to 812 (FHMHINLELL…NVVSFHRLEL (175 aa)). Basic and acidic residues predominate over residues 838–860 (DAKLGEGKEQRSGAGGERGDREG). The tract at residues 838–895 (DAKLGEGKEQRSGAGGERGDREGGQPGGRRERRGGSAARGRGRGRGRAQQFQALGQKV) is disordered. The segment covering 884 to 895 (RAQQFQALGQKV) has biased composition (low complexity).

This sequence belongs to the eIF-3 subunit C family. In terms of assembly, component of the eukaryotic translation initiation factor 3 (eIF-3) complex.

The protein resides in the cytoplasm. Its function is as follows. Component of the eukaryotic translation initiation factor 3 (eIF-3) complex, which is involved in protein synthesis of a specialized repertoire of mRNAs and, together with other initiation factors, stimulates binding of mRNA and methionyl-tRNAi to the 40S ribosome. The eIF-3 complex specifically targets and initiates translation of a subset of mRNAs involved in cell proliferation. This chain is Eukaryotic translation initiation factor 3 subunit C, found in Mycosarcoma maydis (Corn smut fungus).